The chain runs to 129 residues: Glycine cleavage system H protein (129 aa).

In terms of domain architecture, Lipoyl-binding spans 24-106; the sequence is TYTVGITEHA…YAGGWIFKIK (83 aa). K65 bears the N6-lipoyllysine mark.

It belongs to the GcvH family. As to quaternary structure, the glycine cleavage system is composed of four proteins: P, T, L and H. (R)-lipoate serves as cofactor.

Functionally, the glycine cleavage system catalyzes the degradation of glycine. The H protein shuttles the methylamine group of glycine from the P protein to the T protein. The sequence is that of Glycine cleavage system H protein from Escherichia coli O45:K1 (strain S88 / ExPEC).